Consider the following 600-residue polypeptide: Copine-A (600 aa).

2 C2 domains span residues 1–111 (MNLK…TVCL) and 116–246 (KSGK…NVIN). 10 residues coordinate Ca(2+): aspartate 23, aspartate 29, aspartate 82, aspartate 84, aspartate 89, aspartate 151, aspartate 158, aspartate 215, aspartate 217, and aspartate 223. One can recognise a VWFA domain in the interval 286 to 503 (NLIVGIDCTA…ELAAEVLREI (218 aa)). Residues 535-549 (YDNPTTTTTATSPST) are compositionally biased toward low complexity. The interval 535 to 583 (YDNPTTTTTATSPSTGIDLNKGSNVGLNLTKTESSPSPSGGAGIDLNKG) is disordered. Over residues 555-572 (KGSNVGLNLTKTESSPSP) the composition is skewed to polar residues.

The protein belongs to the copine family. Ca(2+) is required as a cofactor.

It localises to the cytoplasm. The protein localises to the membrane. Functionally, required for cytokinesis, contractile vacuole function and development. In Dictyostelium discoideum (Social amoeba), this protein is Copine-A (cpnA).